We begin with the raw amino-acid sequence, 977 residues long: DNA-directed RNA polymerase 3B, chloroplastic (977 aa).

Residues 1–71 (MASTASYSPS…NNIQSQTTVC (71 aa)) constitute a chloroplast transit peptide. Active-site residues include D678, K753, and D910.

The protein belongs to the phage and mitochondrial RNA polymerase family.

It localises to the plastid. The protein resides in the chloroplast. It carries out the reaction RNA(n) + a ribonucleoside 5'-triphosphate = RNA(n+1) + diphosphate. In terms of biological role, DNA-dependent RNA polymerase catalyzes the transcription of DNA into RNA using the four ribonucleoside triphosphates as substrates. The protein is DNA-directed RNA polymerase 3B, chloroplastic (RPOT3-TOM) of Nicotiana tabacum (Common tobacco).